The chain runs to 377 residues: Probable protein phosphatase 2C 61 (377 aa).

The 309-residue stretch at 30 to 338 folds into the PPM-type phosphatase domain; that stretch reads AAGEFSMAAA…DDITAVVVFL (309 aa). Residues D64, G65, D269, and D329 each contribute to the Mn(2+) site.

This sequence belongs to the PP2C family. It depends on Mg(2+) as a cofactor. Requires Mn(2+) as cofactor.

It carries out the reaction O-phospho-L-seryl-[protein] + H2O = L-seryl-[protein] + phosphate. The catalysed reaction is O-phospho-L-threonyl-[protein] + H2O = L-threonyl-[protein] + phosphate. The sequence is that of Probable protein phosphatase 2C 61 from Oryza sativa subsp. japonica (Rice).